The primary structure comprises 681 residues: DNA-directed RNA polymerase subunit beta' (681 aa).

Residues cysteine 69, cysteine 71, cysteine 87, and cysteine 90 each coordinate Zn(2+). Residues aspartate 489, aspartate 491, and aspartate 493 each contribute to the Mg(2+) site.

This sequence belongs to the RNA polymerase beta' chain family. RpoC1 subfamily. In plastids the minimal PEP RNA polymerase catalytic core is composed of four subunits: alpha, beta, beta', and beta''. When a (nuclear-encoded) sigma factor is associated with the core the holoenzyme is formed, which can initiate transcription. Mg(2+) is required as a cofactor. It depends on Zn(2+) as a cofactor.

It localises to the plastid. Its subcellular location is the chloroplast. It catalyses the reaction RNA(n) + a ribonucleoside 5'-triphosphate = RNA(n+1) + diphosphate. Functionally, DNA-dependent RNA polymerase catalyzes the transcription of DNA into RNA using the four ribonucleoside triphosphates as substrates. The protein is DNA-directed RNA polymerase subunit beta' of Solanum bulbocastanum (Wild potato).